A 144-amino-acid chain; its full sequence is Putative sugar phosphate isomerase RT0290 (144 aa).

Residue His12 participates in substrate binding. His101 serves as the catalytic Proton donor. Arg135 contacts substrate.

Belongs to the LacAB/RpiB family.

The sequence is that of Putative sugar phosphate isomerase RT0290 from Rickettsia typhi (strain ATCC VR-144 / Wilmington).